A 503-amino-acid chain; its full sequence is ATP synthase subunit alpha (503 aa).

Residue 170 to 177 (GDRQTGKT) participates in ATP binding.

This sequence belongs to the ATPase alpha/beta chains family. In terms of assembly, F-type ATPases have 2 components, CF(1) - the catalytic core - and CF(0) - the membrane proton channel. CF(1) has five subunits: alpha(3), beta(3), gamma(1), delta(1), epsilon(1). CF(0) has three main subunits: a(1), b(2) and c(9-12). The alpha and beta chains form an alternating ring which encloses part of the gamma chain. CF(1) is attached to CF(0) by a central stalk formed by the gamma and epsilon chains, while a peripheral stalk is formed by the delta and b chains.

Its subcellular location is the cell inner membrane. It catalyses the reaction ATP + H2O + 4 H(+)(in) = ADP + phosphate + 5 H(+)(out). Functionally, produces ATP from ADP in the presence of a proton gradient across the membrane. The alpha chain is a regulatory subunit. This is ATP synthase subunit alpha from Thermotoga maritima (strain ATCC 43589 / DSM 3109 / JCM 10099 / NBRC 100826 / MSB8).